We begin with the raw amino-acid sequence, 571 residues long: Protein E6 homolog (571 aa).

It belongs to the chordopoxvirinae E6 family.

The protein localises to the virion. Functionally, late protein which may play a role in the virion morphogenesis and have therefore an indirect role on viral transcription ability. The chain is Protein E6 homolog from Vertebrata (FPV).